The chain runs to 161 residues: RNA pyrophosphohydrolase (161 aa).

A Nudix hydrolase domain is found at 12 to 154 (PYRPGVGMMI…KRKLYQAVVK (143 aa)). The Nudix box signature appears at 46-67 (GGIVPGETPSIAAMREMLEEIG).

Belongs to the Nudix hydrolase family. RppH subfamily. It depends on a divalent metal cation as a cofactor.

Functionally, accelerates the degradation of transcripts by removing pyrophosphate from the 5'-end of triphosphorylated RNA, leading to a more labile monophosphorylated state that can stimulate subsequent ribonuclease cleavage. The protein is RNA pyrophosphohydrolase of Rickettsia conorii (strain ATCC VR-613 / Malish 7).